The following is a 947-amino-acid chain: MTPLSSPLSQYWQTVVERLPEGFTETSLSVQAKSVLTFSDFALDSVIAHPEWLAELESASPQADEWRHYAGWLQEALAGVCDDASLMRELRFFRRRIMVRIAWAQTLSLVDDETILQQLSHLAETLIVGARDWLYAACCREWGTPCNPQGVPQPLLILGMGKLGGGELNFSSDIDLIFAWPEHGETRGGRRELDNAQFFTRLGQRLIKALDQPTMDGFVYRVDMRLRPFGDSGPLVLSFAALEDYYQEQGRDWERYAMVKARLMGDNDDAWSRELRAMLRPFVFRRYIDFSVIQSLRNMKGMIAREVRRRGLKDNIKLGAGGIREIEFIVQVFQLIRGGREPSLQSRSLLPTLDAIAALHLLPENDVAQLRMAYLFLRRLENLLQSINDEQTQTLPADDLNRARLAWGMKAENWPQLVGELTDHMANVRRVFNELIGDDEADTPQEEERSEPWREVWQDALQEDDSTPVLAHLADEDRRQVLTLIADFRKELDKRPIGPRGRQVLDQLMPHLLADVCSREDAAVTLSRITPLLAGIVTRTTYLELLSEFPGALKHLIMLCAASPMIASQLARYPLLLDELLDPGTLYQPTATDAYRDELRQYLLRVPEEDEEQQLEALRQFKQAQLLRIAAADIAGTLPVMKVSDHLTWLAEAMIDAVVQQAWTQMVARYGQPAHLDERQGRGFAVVGYGKLGGWELGYSSDLDLIFLHDCPMDVMTNGEREIDGRQFYLRLAQRIMHLFSTRTSSGILYEVDARLRPSGAAGMLVTSADAFADYQQHEAWTWEHQALVRARVVYGDPQLTSQFDTVRRTIMTTARDGKTLQTEVREMREKMRAHLGNKHRDRFDIKADEGGITDIEFIAQYLVLRYAHEKPKLTRWSDNVRILELLAQNGIMDEHEAQALTVAYTTLRDELHHLALQELPGHVAQTCFSKERALVQASWRKWLVAV.

Residues 1–440 (MTPLSSPLSQ…VFNELIGDDE (440 aa)) are adenylyl removase. The adenylyl transferase stretch occupies residues 450–947 (SEPWREVWQD…ASWRKWLVAV (498 aa)).

It belongs to the GlnE family. Mg(2+) serves as cofactor.

The enzyme catalyses [glutamine synthetase]-O(4)-(5'-adenylyl)-L-tyrosine + phosphate = [glutamine synthetase]-L-tyrosine + ADP. It carries out the reaction [glutamine synthetase]-L-tyrosine + ATP = [glutamine synthetase]-O(4)-(5'-adenylyl)-L-tyrosine + diphosphate. Functionally, involved in the regulation of glutamine synthetase GlnA, a key enzyme in the process to assimilate ammonia. When cellular nitrogen levels are high, the C-terminal adenylyl transferase (AT) inactivates GlnA by covalent transfer of an adenylyl group from ATP to specific tyrosine residue of GlnA, thus reducing its activity. Conversely, when nitrogen levels are low, the N-terminal adenylyl removase (AR) activates GlnA by removing the adenylyl group by phosphorolysis, increasing its activity. The regulatory region of GlnE binds the signal transduction protein PII (GlnB) which indicates the nitrogen status of the cell. In Salmonella newport (strain SL254), this protein is Bifunctional glutamine synthetase adenylyltransferase/adenylyl-removing enzyme.